A 559-amino-acid chain; its full sequence is MAAQGFLLLASYLLVLLVLARPLGTCLARMMNDIPLPGLAGVERVLWRVAGIRAEEMGWLQYLLAILLFNALGGLALFALLMLQGVLPFNPQHLPGLSWDLALNTAVSFVSNTNWQAYAGESTMSYLSQMVGLTVQNFLSAATGIAVVFALTRAFARQKMSALGNAWVDLTRITLWLLLPLSLLVALFFIQQGVPQNLLAYQPFTTLEGAHQLLPMGPVASQEAIKLLGTNGGGFFNANSAHPFENPTALTNLVQMLAIFLIPAALCFAFGEVVSDRRQGRAILWAMTLIFILCVAVVMWAETRGNPHLLTLGADSSLNMEGKESRFGILASSLFAVITTAASCGAVNAMHDSFTALGGMVPMWLMQIGEVVFGGVGSGLYGMLLFVMLAVFIAGLMVGRTPEYLGKKIDVREMKMIALAILVTPTLVLLGTALAMMTDAGRAGMFNPGPHGFSEVLYAVTSAANNNGSAFAGLGAATPFWNLLLAFCMLVGRFAVIIPVMAIAGSLVAKKIQPASPGTLATHDALFIGLLIGTVLLVGALTFIPALALGPLAEHFSLL.

The next 12 helical transmembrane spans lie at 5 to 25 (GFLLLASYLLVLLVLARPLGT), 63 to 83 (LLAILLFNALGGLALFALLML), 131 to 151 (VGLTVQNFLSAATGIAVVFAL), 173 to 193 (ITLWLLLPLSLLVALFFIQQG), 254 to 274 (VQMLAIFLIPAALCFAFGEVV), 282 to 302 (AILWAMTLIFILCVAVVMWAE), 327 to 347 (FGILASSLFAVITTAASCGAV), 356 to 376 (ALGGMVPMWLMQIGEVVFGGV), 379 to 399 (GLYGMLLFVMLAVFIAGLMVG), 416 to 436 (MIALAILVTPTLVLLGTALAM), 483 to 503 (LLLAFCMLVGRFAVIIPVMAI), and 525 to 545 (ALFIGLLIGTVLLVGALTFIP).

Belongs to the KdpA family. As to quaternary structure, the system is composed of three essential subunits: KdpA, KdpB and KdpC.

It is found in the cell inner membrane. Functionally, part of the high-affinity ATP-driven potassium transport (or Kdp) system, which catalyzes the hydrolysis of ATP coupled with the electrogenic transport of potassium into the cytoplasm. This subunit binds the periplasmic potassium ions and delivers the ions to the membrane domain of KdpB through an intramembrane tunnel. This Klebsiella pneumoniae (strain 342) protein is Potassium-transporting ATPase potassium-binding subunit.